A 207-amino-acid chain; its full sequence is Ribosome maturation factor RimM (207 aa).

The region spanning D114 to Y207 is the PRC barrel domain.

It belongs to the RimM family. As to quaternary structure, binds ribosomal protein uS19.

It is found in the cytoplasm. Its function is as follows. An accessory protein needed during the final step in the assembly of 30S ribosomal subunit, possibly for assembly of the head region. Essential for efficient processing of 16S rRNA. May be needed both before and after RbfA during the maturation of 16S rRNA. It has affinity for free ribosomal 30S subunits but not for 70S ribosomes. This chain is Ribosome maturation factor RimM, found in Bordetella pertussis (strain Tohama I / ATCC BAA-589 / NCTC 13251).